Consider the following 370-residue polypeptide: Putative F-box protein At1g47390 (370 aa).

An F-box domain is found at 1–47 (MAPEEKLPCELIEEILSRVPPESLVRFRTVSKKWNALFDDKMFINNH).

The polypeptide is Putative F-box protein At1g47390 (Arabidopsis thaliana (Mouse-ear cress)).